A 172-amino-acid chain; its full sequence is Translation initiation factor IF-3 (172 aa).

The protein belongs to the IF-3 family. In terms of assembly, monomer.

The protein localises to the cytoplasm. Its function is as follows. IF-3 binds to the 30S ribosomal subunit and shifts the equilibrium between 70S ribosomes and their 50S and 30S subunits in favor of the free subunits, thus enhancing the availability of 30S subunits on which protein synthesis initiation begins. This Campylobacter curvus (strain 525.92) protein is Translation initiation factor IF-3.